A 272-amino-acid chain; its full sequence is 2,3,4,5-tetrahydropyridine-2,6-dicarboxylate N-succinyltransferase (272 aa).

Substrate is bound by residues Arg-104 and Asp-141.

It belongs to the transferase hexapeptide repeat family. In terms of assembly, homotrimer.

The protein localises to the cytoplasm. The catalysed reaction is (S)-2,3,4,5-tetrahydrodipicolinate + succinyl-CoA + H2O = (S)-2-succinylamino-6-oxoheptanedioate + CoA. It functions in the pathway amino-acid biosynthesis; L-lysine biosynthesis via DAP pathway; LL-2,6-diaminopimelate from (S)-tetrahydrodipicolinate (succinylase route): step 1/3. The protein is 2,3,4,5-tetrahydropyridine-2,6-dicarboxylate N-succinyltransferase of Dechloromonas aromatica (strain RCB).